The following is a 466-amino-acid chain: Probable sensor protein PcoS (466 aa).

Residues 1-10 (MRFKISLTTR) lie on the Cytoplasmic side of the membrane. The chain crosses the membrane as a helical span at residues 11–31 (LSLIFSAVMLTVWWLSSFILI). Residues 32 to 171 (STLNDYFDNQ…HTLLMDKLST (140 aa)) are Periplasmic-facing. The chain crosses the membrane as a helical span at residues 172–192 (WLFWFNIGLVFISVFLGWLTT). The 54-residue stretch at 193 to 246 (RIGLKPLREMTSLASSMTVHSLDQRLNPDLAPPEISETMQEFNNMFDRLEGAFR) folds into the HAMP domain. Over 193-466 (RIGLKPLREM…IVFKVRLLMD (274 aa)) the chain is Cytoplasmic. The region spanning 254 to 466 (DIAHELRTPV…IVFKVRLLMD (213 aa)) is the Histidine kinase domain. Position 257 is a phosphohistidine; by autocatalysis (H257).

It is found in the cell inner membrane. The catalysed reaction is ATP + protein L-histidine = ADP + protein N-phospho-L-histidine.. Functionally, probable member of a two-component regulatory system PcoS/PcoR. May activate PcoR by phosphorylation. The chain is Probable sensor protein PcoS (pcoS) from Escherichia coli.